We begin with the raw amino-acid sequence, 361 residues long: POU domain, class 3, transcription factor 4 (361 aa).

2 disordered regions span residues 99–131 (PHVA…GQPL) and 144–192 (MLEH…PTSD). Polar residues predominate over residues 119-131 (APNSSITNSGQPL). Residues 165 to 183 (VLREPPDHGELGSHHCQDH) are compositionally biased toward basic and acidic residues. In terms of domain architecture, POU-specific spans 186–260 (EETPTSDELE…LLNKWLEEAD (75 aa)). Serine 265 carries the post-translational modification Phosphoserine. The segment at residues 278–337 (KRKKRTSIEVSVKGVLETHFLKCPKPAAQEISSLADSLQLEKEVVRVWFCNRRQKEKRMT) is a DNA-binding region (homeobox). The interval 334 to 361 (KRMTPPGDQQPHEVYSHTVKTDASCHDL) is disordered. The span at 343-361 (QPHEVYSHTVKTDASCHDL) shows a compositional bias: basic and acidic residues.

The protein belongs to the POU transcription factor family. Class-3 subfamily.

The protein localises to the nucleus. Probable transcription factor which exert its primary action widely during early neural development and in a very limited set of neurons in the mature brain. This is POU domain, class 3, transcription factor 4 (Pou3f4) from Mesocricetus auratus (Golden hamster).